The primary structure comprises 267 residues: Type III pantothenate kinase (267 aa).

Residue 6-13 participates in ATP binding; sequence DVRNTHTT. 109–112 lines the substrate pocket; it reads GADR. The active-site Proton acceptor is D111. Residue D131 participates in K(+) binding. S134 is an ATP binding site. T186 lines the substrate pocket.

The protein belongs to the type III pantothenate kinase family. As to quaternary structure, homodimer. It depends on NH4(+) as a cofactor. The cofactor is K(+).

Its subcellular location is the cytoplasm. It catalyses the reaction (R)-pantothenate + ATP = (R)-4'-phosphopantothenate + ADP + H(+). It functions in the pathway cofactor biosynthesis; coenzyme A biosynthesis; CoA from (R)-pantothenate: step 1/5. Functionally, catalyzes the phosphorylation of pantothenate (Pan), the first step in CoA biosynthesis. This is Type III pantothenate kinase from Mycobacterium sp. (strain JLS).